We begin with the raw amino-acid sequence, 244 residues long: Adenosylcobinamide-GDP ribazoletransferase (244 aa).

The next 5 helical transmembrane spans lie at 33–53 (WFAV…WLGA), 57–77 (PWLA…GLHL), 109–129 (FAVI…MLAV), 132–152 (GVGW…AVWW), and 176–196 (FWLS…VLLL).

Belongs to the CobS family. The cofactor is Mg(2+).

The protein resides in the cell inner membrane. The catalysed reaction is alpha-ribazole + adenosylcob(III)inamide-GDP = adenosylcob(III)alamin + GMP + H(+). The enzyme catalyses alpha-ribazole 5'-phosphate + adenosylcob(III)inamide-GDP = adenosylcob(III)alamin 5'-phosphate + GMP + H(+). It functions in the pathway cofactor biosynthesis; adenosylcobalamin biosynthesis; adenosylcobalamin from cob(II)yrinate a,c-diamide: step 7/7. Its function is as follows. Joins adenosylcobinamide-GDP and alpha-ribazole to generate adenosylcobalamin (Ado-cobalamin). Also synthesizes adenosylcobalamin 5'-phosphate from adenosylcobinamide-GDP and alpha-ribazole 5'-phosphate. This is Adenosylcobinamide-GDP ribazoletransferase from Laribacter hongkongensis (strain HLHK9).